The sequence spans 358 residues: Type II restriction enzyme HpaII (358 aa).

In terms of assembly, homodimer.

It catalyses the reaction Endonucleolytic cleavage of DNA to give specific double-stranded fragments with terminal 5'-phosphates.. Its function is as follows. An E and P subtype restriction enzyme that recognizes the double-stranded sequence 5'-CCGG-3' and cleaves after C-1. This chain is Type II restriction enzyme HpaII, found in Haemophilus parainfluenzae.